A 222-amino-acid chain; its full sequence is Small ribosomal subunit protein uS3 (222 aa).

One can recognise a KH type-2 domain in the interval 39–108 (IRKFVKNKLS…NVLINIVEVK (70 aa)).

It belongs to the universal ribosomal protein uS3 family. In terms of assembly, part of the 30S ribosomal subunit. Forms a tight complex with proteins S10 and S14.

Binds the lower part of the 30S subunit head. Binds mRNA in the 70S ribosome, positioning it for translation. The sequence is that of Small ribosomal subunit protein uS3 from Clostridium acetobutylicum (strain ATCC 824 / DSM 792 / JCM 1419 / IAM 19013 / LMG 5710 / NBRC 13948 / NRRL B-527 / VKM B-1787 / 2291 / W).